The chain runs to 113 residues: MQAKAVARTVRIAPRKARLVIDLIRGKEVGEAVAILRHTPKAASPIIEKVLKSAVANAEHNYDMDVNKLVITEAYVDEGPTLKRFRPRAMGRASAINKRTSHITIVVSEKKEG.

It belongs to the universal ribosomal protein uL22 family. In terms of assembly, part of the 50S ribosomal subunit.

In terms of biological role, this protein binds specifically to 23S rRNA; its binding is stimulated by other ribosomal proteins, e.g. L4, L17, and L20. It is important during the early stages of 50S assembly. It makes multiple contacts with different domains of the 23S rRNA in the assembled 50S subunit and ribosome. Functionally, the globular domain of the protein is located near the polypeptide exit tunnel on the outside of the subunit, while an extended beta-hairpin is found that lines the wall of the exit tunnel in the center of the 70S ribosome. The chain is Large ribosomal subunit protein uL22 from Geobacillus sp. (strain WCH70).